The chain runs to 831 residues: G-type lectin S-receptor-like serine/threonine-protein kinase At1g61390 (831 aa).

The signal sequence occupies residues 1–42 (MYKLPQRNCADKQEYTVHMRKMGMVIFACLLLLIIFPTFGYA). The Bulb-type lectin domain maps to 43 to 162 (DINTSSPLSI…VSGKTLWKSF (120 aa)). Over 43–448 (DINTSSPLSI…SSELAGSNRT (406 aa)) the chain is Extracellular. N-linked (GlcNAc...) asparagine glycosylation is found at Asn-45, Asn-71, Asn-106, and Asn-112. The 37-residue stretch at 298–334 (PTSSCDLYRACGPFGLCVRSRNPKCICLKGFVPKSDD) folds into the EGF-like; atypical domain. 2 disulfides stabilise this stretch: Cys-302–Cys-314 and Cys-308–Cys-322. Asn-340, Asn-356, Asn-399, and Asn-446 each carry an N-linked (GlcNAc...) asparagine glycan. Residues 353–439 (CHTNSSTKTQ…GESLSLRLAS (87 aa)) form the PAN domain. Disulfide bonds link Cys-392–Cys-413 and Cys-396–Cys-402. A helical transmembrane segment spans residues 449–469 (KIILGTTVSLSIFVILVFAAY). The Cytoplasmic portion of the chain corresponds to 470-831 (KSWRYRTKQN…EITQSVIQGR (362 aa)). The Protein kinase domain occupies 520–803 (FSSSNKLGQG…ELPSPKQPTF (284 aa)). ATP contacts are provided by residues 526–534 (LGQGGFGPV) and Lys-548. Phosphoserine is present on residues Ser-554 and Ser-569. Residues 609 to 626 (TLKFEIDWQKRFNIIQGV) are caM-binding. Asp-645 (proton acceptor) is an active-site residue. Phosphoserine is present on residues Ser-649 and Ser-662. Position 679 is a phosphothreonine (Thr-679). Residues Ser-722 and Ser-814 each carry the phosphoserine modification.

The protein belongs to the protein kinase superfamily. Ser/Thr protein kinase family.

The protein resides in the cell membrane. The catalysed reaction is L-seryl-[protein] + ATP = O-phospho-L-seryl-[protein] + ADP + H(+). The enzyme catalyses L-threonyl-[protein] + ATP = O-phospho-L-threonyl-[protein] + ADP + H(+). The protein is G-type lectin S-receptor-like serine/threonine-protein kinase At1g61390 of Arabidopsis thaliana (Mouse-ear cress).